The chain runs to 261 residues: High-affinity zinc uptake system membrane protein ZnuB (261 aa).

7 helical membrane passes run 8-28 (ALLT…FVVW), 54-74 (VNPY…MVWL), 84-104 (TLLG…VGLL), 125-145 (TDLI…IYFW), 171-191 (ILMI…GALI), 214-234 (VGWA…LSAF), and 236-256 (DTAA…LSLF).

It belongs to the ABC-3 integral membrane protein family.

It is found in the cell inner membrane. In terms of biological role, involved in the high-affinity zinc uptake transport system. The chain is High-affinity zinc uptake system membrane protein ZnuB (znuB) from Haemophilus influenzae (strain ATCC 51907 / DSM 11121 / KW20 / Rd).